Reading from the N-terminus, the 103-residue chain is Small ribosomal subunit protein uS10 (103 aa).

It belongs to the universal ribosomal protein uS10 family. In terms of assembly, part of the 30S ribosomal subunit.

In terms of biological role, involved in the binding of tRNA to the ribosomes. This chain is Small ribosomal subunit protein uS10, found in Fusobacterium nucleatum subsp. nucleatum (strain ATCC 25586 / DSM 15643 / BCRC 10681 / CIP 101130 / JCM 8532 / KCTC 2640 / LMG 13131 / VPI 4355).